Consider the following 116-residue polypeptide: NADH-quinone oxidoreductase subunit A (116 aa).

A run of 3 helical transmembrane segments spans residues 3 to 23 (FTLL…ALGI), 61 to 81 (FAIL…WAVV), and 85 to 105 (LGVY…LGLA).

It belongs to the complex I subunit 3 family. In terms of assembly, NDH-1 is composed of 14 different subunits. Subunits NuoA, H, J, K, L, M, N constitute the membrane sector of the complex.

Its subcellular location is the cell inner membrane. The enzyme catalyses a quinone + NADH + 5 H(+)(in) = a quinol + NAD(+) + 4 H(+)(out). Functionally, NDH-1 shuttles electrons from NADH, via FMN and iron-sulfur (Fe-S) centers, to quinones in the respiratory chain. The immediate electron acceptor for the enzyme in this species is believed to be a menaquinone. Couples the redox reaction to proton translocation (for every two electrons transferred, four hydrogen ions are translocated across the cytoplasmic membrane), and thus conserves the redox energy in a proton gradient. The protein is NADH-quinone oxidoreductase subunit A of Phocaeicola vulgatus (strain ATCC 8482 / DSM 1447 / JCM 5826 / CCUG 4940 / NBRC 14291 / NCTC 11154) (Bacteroides vulgatus).